The following is a 371-amino-acid chain: Putative ribonuclease 3 (371 aa).

Residues 10–136 (AKSVKDKYIP…FLGAVCMAVD (127 aa)) enclose the RNase III domain.

Belongs to the IIV-6 142R family.

The enzyme catalyses Endonucleolytic cleavage to 5'-phosphomonoester.. Digests double-stranded RNA. The protein is Putative ribonuclease 3 of Frog virus 3 (isolate Goorha) (FV-3).